The chain runs to 270 residues: Putative hydro-lyase H16_B1759 (270 aa).

It belongs to the D-glutamate cyclase family.

The chain is Putative hydro-lyase H16_B1759 from Cupriavidus necator (strain ATCC 17699 / DSM 428 / KCTC 22496 / NCIMB 10442 / H16 / Stanier 337) (Ralstonia eutropha).